Here is a 215-residue protein sequence, read N- to C-terminus: Cytochrome b6 (215 aa).

Residues I32 to F52 traverse the membrane as a helical segment. Position 35 (C35) interacts with heme c. Heme b is bound by residues H86 and H100. The next 3 helical transmembrane spans lie at A90 to F110, L116 to Y136, and L186 to I206. Heme b is bound by residues H187 and H202.

Belongs to the cytochrome b family. PetB subfamily. As to quaternary structure, the 4 large subunits of the cytochrome b6-f complex are cytochrome b6, subunit IV (17 kDa polypeptide, PetD), cytochrome f and the Rieske protein, while the 4 small subunits are PetG, PetL, PetM and PetN. The complex functions as a dimer. Requires heme b as cofactor. Heme c serves as cofactor.

Its subcellular location is the plastid. The protein localises to the chloroplast thylakoid membrane. In terms of biological role, component of the cytochrome b6-f complex, which mediates electron transfer between photosystem II (PSII) and photosystem I (PSI), cyclic electron flow around PSI, and state transitions. This chain is Cytochrome b6, found in Mesostigma viride (Green alga).